A 1939-amino-acid polypeptide reads, in one-letter code: Myosin-6 (1939 aa).

A Myosin N-terminal SH3-like domain is found at 32–81 (DIRTECFVPDDKEEFVKAKIVSREGGKVTAETENGKTVTVKEDQVMQQNP). One can recognise a Myosin motor domain in the interval 85–780 (DKIEDMAMLT…LLGLLEEMRD (696 aa)). Residue Lys129 is modified to N6,N6,N6-trimethyllysine. 178 to 185 (GESGAGKT) provides a ligand contact to ATP. Thr379 carries the phosphothreonine modification. Ser417 carries the phosphoserine modification. Actin-binding stretches follow at residues 657–679 (LNKLMTNLRTTHPHFVRCIIPNE) and 759–773 (KFGHTKVFFKAGLLG). An IQ domain is found at 783-812 (LSRIITRIQAQARGQLMRIEFKKMVERRDA). Positions 842–1939 (LKSAETEKEM…GAKQKMHDEE (1098 aa)) form a coiled coil. 2 positions are modified to phosphoserine: Ser1090 and Ser1139. Position 1261 is a phosphotyrosine (Tyr1261). Position 1271 is a phosphoserine (Ser1271). Phosphothreonine is present on residues Thr1277 and Thr1284. The residue at position 1309 (Ser1309) is a Phosphoserine. Residue Tyr1310 is modified to Phosphotyrosine. Thr1311 carries the phosphothreonine modification. At Ser1512 the chain carries Phosphoserine. Phosphothreonine occurs at positions 1515 and 1681. Positions 1908 to 1939 (AEERADIAESQVNKLRAKSRDIGAKQKMHDEE) are disordered. Positions 1925–1939 (KSRDIGAKQKMHDEE) are enriched in basic and acidic residues.

This sequence belongs to the TRAFAC class myosin-kinesin ATPase superfamily. Myosin family. In terms of assembly, muscle myosin is a hexameric protein that consists of 2 heavy chain subunits (MHC), 2 alkali light chain subunits (MLC) and 2 regulatory light chain subunits (MLC-2).

Its subcellular location is the cytoplasm. The protein resides in the myofibril. Functionally, muscle contraction. This chain is Myosin-6 (MYH6), found in Mesocricetus auratus (Golden hamster).